A 119-amino-acid polypeptide reads, in one-letter code: Holo-[acyl-carrier-protein] synthase (119 aa).

Mg(2+) contacts are provided by aspartate 7 and glutamate 56.

The protein belongs to the P-Pant transferase superfamily. AcpS family. It depends on Mg(2+) as a cofactor.

Its subcellular location is the cytoplasm. It carries out the reaction apo-[ACP] + CoA = holo-[ACP] + adenosine 3',5'-bisphosphate + H(+). In terms of biological role, transfers the 4'-phosphopantetheine moiety from coenzyme A to a Ser of acyl-carrier-protein. This Chlamydia trachomatis serovar D (strain ATCC VR-885 / DSM 19411 / UW-3/Cx) protein is Holo-[acyl-carrier-protein] synthase.